We begin with the raw amino-acid sequence, 170 residues long: 6,7-dimethyl-8-ribityllumazine synthase 2 (170 aa).

Residues W25, 59-61, and 83-85 contribute to the 5-amino-6-(D-ribitylamino)uracil site; these read AFE and LVV. R91 functions as the Proton donor in the catalytic mechanism. S116 is a binding site for 5-amino-6-(D-ribitylamino)uracil. H130 provides a ligand contact to (2S)-2-hydroxy-3-oxobutyl phosphate.

Belongs to the DMRL synthase family. As to quaternary structure, forms an icosahedral capsid composed of 60 subunits, arranged as a dodecamer of pentamers.

It carries out the reaction (2S)-2-hydroxy-3-oxobutyl phosphate + 5-amino-6-(D-ribitylamino)uracil = 6,7-dimethyl-8-(1-D-ribityl)lumazine + phosphate + 2 H2O + H(+). The protein operates within cofactor biosynthesis; riboflavin biosynthesis; riboflavin from 2-hydroxy-3-oxobutyl phosphate and 5-amino-6-(D-ribitylamino)uracil: step 1/2. Catalyzes the formation of 6,7-dimethyl-8-ribityllumazine by condensation of 5-amino-6-(D-ribitylamino)uracil with 3,4-dihydroxy-2-butanone 4-phosphate. This is the penultimate step in the biosynthesis of riboflavin. This chain is 6,7-dimethyl-8-ribityllumazine synthase 2, found in Pseudomonas syringae pv. tomato (strain ATCC BAA-871 / DC3000).